We begin with the raw amino-acid sequence, 306 residues long: Polyisoprenyl-teichoic acid--peptidoglycan teichoic acid transferase TagU (306 aa).

Residues 1–11 (MRNERRKKKKT) lie on the Cytoplasmic side of the membrane. A helical; Signal-anchor for type II membrane protein membrane pass occupies residues 12 to 32 (LLLTILTIIGLLVLGTGGYAY). Residues 33–306 (YLWHKAASTV…TKELKESLEK (274 aa)) are Extracellular-facing.

Belongs to the LytR/CpsA/Psr (LCP) family. In terms of assembly, interacts with MreB. Interacts with FloT.

It localises to the cell membrane. Its subcellular location is the membrane raft. It functions in the pathway cell wall biogenesis. Its function is as follows. May catalyze the final step in cell wall teichoic acid biosynthesis, the transfer of the anionic cell wall polymers (APs) from their lipid-linked precursor to the cell wall peptidoglycan (PG). The polypeptide is Polyisoprenyl-teichoic acid--peptidoglycan teichoic acid transferase TagU (Bacillus subtilis (strain 168)).